The following is an 805-amino-acid chain: MTERRLTRIHSIKERLGDSLSHHPNELLALFSRFIKQGKGMLERHQLLTEYESVIPEADREKLKDGVFEDTLRASQEAIVIPPWVALAIRPRPGVWEYVRVNVNELAVEECSEYLKFKEDLVDRSSQSNFVLEMDFEPFNANVPRPSLSKSIGNGVQFLNRHLSSKLFHDKESLYPLLNFLREHNYKGTTLMLNDRLQSLSALQTALRKADRYLLSISKDTPYSEFNHSFQVLGLEKGWGDTASRVSENIHLLLDLLEAPDPSTLEKFLGTIPMVFNVVILSPHGYFAQANVLGYPDTGGQVVYILDQVRALETEMLLKIKQQGLDITPRILIVTRLLPDAVGTTCGQRLERVLGTEHTHILRVPFRTDKGILRKWISRFEVWPYLETYAEDVAHELAGEMQATPDLIIGNYSDGNLVASLLAHRLGITQCTIAHALEKTKYPNSDIYLKKFDDQYHFSCQFTADLIAMNQSDFIITSTFQEIAGSKDTVGQYESHTAFTLPGLYRVVHGIDVFDPKFNIVSPGADMSIYYPYFEQEKRLTALHAEIEELLYSSVENEEHKFVLKDRNKPIIFSMARLDRVKNMTGLVELYGKNDRLKELVNLVVVAGDHGKESKDLEEQAELKKMYKLIEEYKLQGHIRWISAQMNRVRNGELYRYIADTKGAFVQPAFYEAFGLTVVESMTCGLPTFATCHGGPAEIIVHGVSGFHIDPYHGDKASEQLVSFFEKCKEDPAHWEKISQGGLQRIYEKYTWKLYSERLMTLAGVYGFWKYVSNLDRRETRRYLEMFYALKYRNLAKSVPLAIDN.

The interval 274-751 is GT-B glycosyltransferase; that stretch reads MVFNVVILSP…GLQRIYEKYT (478 aa).

It belongs to the glycosyltransferase 1 family. Plant sucrose synthase subfamily.

The catalysed reaction is an NDP-alpha-D-glucose + D-fructose = a ribonucleoside 5'-diphosphate + sucrose + H(+). Sucrose-cleaving enzyme that provides UDP-glucose and fructose for various metabolic pathways. The polypeptide is Sucrose synthase 1 (Tulipa gesneriana (Garden tulip)).